Consider the following 462-residue polypeptide: Trigger factor (462 aa).

One can recognise a PPIase FKBP-type domain in the interval 161–246 (GDVVVIDFVG…VKEVRAPKAA (86 aa)). The segment covering 428-437 (SVEDLRKDPD) has biased composition (basic and acidic residues). The tract at residues 428–462 (SVEDLRKDPDEASADGEAAPAKPKKKAAAKKKAAE) is disordered. Positions 449–462 (KPKKKAAAKKKAAE) are enriched in basic residues.

It belongs to the FKBP-type PPIase family. Tig subfamily.

It is found in the cytoplasm. It carries out the reaction [protein]-peptidylproline (omega=180) = [protein]-peptidylproline (omega=0). In terms of biological role, involved in protein export. Acts as a chaperone by maintaining the newly synthesized protein in an open conformation. Functions as a peptidyl-prolyl cis-trans isomerase. This is Trigger factor from Paramagnetospirillum magneticum (strain ATCC 700264 / AMB-1) (Magnetospirillum magneticum).